A 214-amino-acid polypeptide reads, in one-letter code: Octanoyltransferase (214 aa).

One can recognise a BPL/LPL catalytic domain in the interval 35-211 (KSNMNFIWLG…IIHEEFNFNF (177 aa)). Substrate-binding positions include 75–82 (RGGEVTCH), 142–144 (SIG), and 155–157 (GFS). Cysteine 173 acts as the Acyl-thioester intermediate in catalysis.

This sequence belongs to the LipB family.

The protein localises to the cytoplasm. The enzyme catalyses octanoyl-[ACP] + L-lysyl-[protein] = N(6)-octanoyl-L-lysyl-[protein] + holo-[ACP] + H(+). The protein operates within protein modification; protein lipoylation via endogenous pathway; protein N(6)-(lipoyl)lysine from octanoyl-[acyl-carrier-protein]: step 1/2. Its function is as follows. Catalyzes the transfer of endogenously produced octanoic acid from octanoyl-acyl-carrier-protein onto the lipoyl domains of lipoate-dependent enzymes. Lipoyl-ACP can also act as a substrate although octanoyl-ACP is likely to be the physiological substrate. This Prochlorococcus marinus subsp. pastoris (strain CCMP1986 / NIES-2087 / MED4) protein is Octanoyltransferase.